Consider the following 458-residue polypeptide: DNA repair protein RadA (458 aa).

The C4-type zinc finger occupies Cys10 to Cys27. Gly98–Ser105 contributes to the ATP binding site. The short motif at Lys255–Gly259 is the RadA KNRFG motif element. A lon-protease-like region spans residues Asp354–Gly458.

Belongs to the RecA family. RadA subfamily. Interacts with DisA.

Its function is as follows. DNA-dependent ATPase involved in processing of recombination intermediates, plays a role in repairing DNA breaks. Stimulates the branch migration of RecA-mediated strand transfer reactions, allowing the 3' invading strand to extend heteroduplex DNA faster. Binds ssDNA in the presence of ADP but not other nucleotides, has ATPase activity that is stimulated by ssDNA and various branched DNA structures, but inhibited by SSB. Does not have RecA's homology-searching function. In terms of biological role, plays a role in DNA repair. Might stabilize or process Holliday junction intermediates. May work with DisA following methyl methanesulfonate (MMS) but not H(2)O(2) damage; DisA is a DNA integrity scanning protein with c-di-AMP synthase activity. This is DNA repair protein RadA from Bacillus subtilis (strain 168).